Reading from the N-terminus, the 116-residue chain is MRKTFRIKKPADFQIVFNKHQSVANKYFIVYHIDKPEQKHFRLGLSVSKKVGKAHDRVWVKRRIRQSILELKSDLPHDIDLLVIARPAVAKQSQKFIKEQIIHVLKLADILKVEDK.

It belongs to the RnpA family. As to quaternary structure, consists of a catalytic RNA component (M1 or rnpB) and a protein subunit.

The catalysed reaction is Endonucleolytic cleavage of RNA, removing 5'-extranucleotides from tRNA precursor.. Functionally, RNaseP catalyzes the removal of the 5'-leader sequence from pre-tRNA to produce the mature 5'-terminus. It can also cleave other RNA substrates such as 4.5S RNA. The protein component plays an auxiliary but essential role in vivo by binding to the 5'-leader sequence and broadening the substrate specificity of the ribozyme. The sequence is that of Ribonuclease P protein component from Leuconostoc citreum (strain KM20).